Reading from the N-terminus, the 182-residue chain is Large ribosomal subunit protein uL6 (182 aa).

It belongs to the universal ribosomal protein uL6 family. In terms of assembly, part of the 50S ribosomal subunit.

In terms of biological role, this protein binds to the 23S rRNA, and is important in its secondary structure. It is located near the subunit interface in the base of the L7/L12 stalk, and near the tRNA binding site of the peptidyltransferase center. The protein is Large ribosomal subunit protein uL6 of Dehalococcoides mccartyi (strain ATCC BAA-2100 / JCM 16839 / KCTC 5957 / BAV1).